Consider the following 281-residue polypeptide: tRNA uridine(34) hydroxylase (281 aa).

The Rhodanese domain occupies 125-222 (AREDVKTIDT…YFLKTKNKDG (98 aa)). Cys182 (cysteine persulfide intermediate) is an active-site residue.

It belongs to the TrhO family.

It carries out the reaction uridine(34) in tRNA + AH2 + O2 = 5-hydroxyuridine(34) in tRNA + A + H2O. Catalyzes oxygen-dependent 5-hydroxyuridine (ho5U) modification at position 34 in tRNAs. The polypeptide is tRNA uridine(34) hydroxylase (Neorickettsia sennetsu (strain ATCC VR-367 / Miyayama) (Ehrlichia sennetsu)).